Here is a 241-residue protein sequence, read N- to C-terminus: 3-oxoacyl-[acyl-carrier-protein] reductase FabG (241 aa).

NADP(+) is bound by residues 13-16 (GASS), Ser38, 57-58 (EV), and Asn83. Ser135 contributes to the substrate binding site. Tyr148 functions as the Proton acceptor in the catalytic mechanism. Residues 148 to 152 (YCASK) and Ile181 contribute to the NADP(+) site.

It belongs to the short-chain dehydrogenases/reductases (SDR) family. As to quaternary structure, homotetramer.

It catalyses the reaction a (3R)-hydroxyacyl-[ACP] + NADP(+) = a 3-oxoacyl-[ACP] + NADPH + H(+). Its pathway is lipid metabolism; fatty acid biosynthesis. In terms of biological role, catalyzes the NADPH-dependent reduction of beta-ketoacyl-ACP substrates to beta-hydroxyacyl-ACP products, the first reductive step in the elongation cycle of fatty acid biosynthesis. The sequence is that of 3-oxoacyl-[acyl-carrier-protein] reductase FabG (fabG) from Rickettsia prowazekii (strain Madrid E).